Reading from the N-terminus, the 269-residue chain is Putative phosphoenolpyruvate synthase regulatory protein (269 aa).

149–156 (GVSRSGKT) lines the ADP pocket.

It belongs to the pyruvate, phosphate/water dikinase regulatory protein family. PSRP subfamily.

The catalysed reaction is [pyruvate, water dikinase] + ADP = [pyruvate, water dikinase]-phosphate + AMP + H(+). It catalyses the reaction [pyruvate, water dikinase]-phosphate + phosphate + H(+) = [pyruvate, water dikinase] + diphosphate. Functionally, bifunctional serine/threonine kinase and phosphorylase involved in the regulation of the phosphoenolpyruvate synthase (PEPS) by catalyzing its phosphorylation/dephosphorylation. In Colwellia psychrerythraea (strain 34H / ATCC BAA-681) (Vibrio psychroerythus), this protein is Putative phosphoenolpyruvate synthase regulatory protein.